The chain runs to 197 residues: MAAKEKISRREHILQCLAQMLETNPGQRITTAKLAAEVGVSEAALYRHFPSKARMFEGLIEFIEDSLLSRINLIMDDEKDTMRRCQLVLQLLLLFAERNPGISRVLNGDALLGENERLRSRVSALFGKIETQLKQILREKTLREGKGFELDEAMLANLLLAVAEGRIAQYIRSEFKQKPTEHFDEQWGFIQKQLLQS.

Residues 7 to 67 (ISRREHILQC…GLIEFIEDSL (61 aa)) enclose the HTH tetR-type domain. The segment at residues 30 to 49 (TTAKLAAEVGVSEAALYRHF) is a DNA-binding region (H-T-H motif).

The protein belongs to the nucleoid occlusion factor SlmA family. As to quaternary structure, homodimer. Interacts with FtsZ.

The protein localises to the cytoplasm. It is found in the nucleoid. Functionally, required for nucleoid occlusion (NO) phenomenon, which prevents Z-ring formation and cell division over the nucleoid. Acts as a DNA-associated cell division inhibitor that binds simultaneously chromosomal DNA and FtsZ, and disrupts the assembly of FtsZ polymers. SlmA-DNA-binding sequences (SBS) are dispersed on non-Ter regions of the chromosome, preventing FtsZ polymerization at these regions. This is Nucleoid occlusion factor SlmA from Shewanella amazonensis (strain ATCC BAA-1098 / SB2B).